A 240-amino-acid chain; its full sequence is UDP-2,3-diacylglucosamine hydrolase (240 aa).

Residues aspartate 9, histidine 11, aspartate 43, asparagine 81, and histidine 116 each coordinate Mn(2+). Asparagine 81 to arginine 82 contacts substrate. Positions 124, 162, 166, 169, and 197 each coordinate substrate. 2 residues coordinate Mn(2+): histidine 197 and histidine 199.

This sequence belongs to the LpxH family. Mn(2+) is required as a cofactor.

It is found in the cell inner membrane. The catalysed reaction is UDP-2-N,3-O-bis[(3R)-3-hydroxytetradecanoyl]-alpha-D-glucosamine + H2O = 2-N,3-O-bis[(3R)-3-hydroxytetradecanoyl]-alpha-D-glucosaminyl 1-phosphate + UMP + 2 H(+). Its pathway is glycolipid biosynthesis; lipid IV(A) biosynthesis; lipid IV(A) from (3R)-3-hydroxytetradecanoyl-[acyl-carrier-protein] and UDP-N-acetyl-alpha-D-glucosamine: step 4/6. In terms of biological role, hydrolyzes the pyrophosphate bond of UDP-2,3-diacylglucosamine to yield 2,3-diacylglucosamine 1-phosphate (lipid X) and UMP by catalyzing the attack of water at the alpha-P atom. Involved in the biosynthesis of lipid A, a phosphorylated glycolipid that anchors the lipopolysaccharide to the outer membrane of the cell. This is UDP-2,3-diacylglucosamine hydrolase from Neisseria gonorrhoeae (strain ATCC 700825 / FA 1090).